Here is a 476-residue protein sequence, read N- to C-terminus: Zinc finger CCCH domain-containing protein 6 (476 aa).

Low complexity predominate over residues 1–10 (MEQPHAAAAA). The disordered stretch occupies residues 1 to 57 (MEQPHAAAAAAGGGEGEGGASPDTGLEGPMWRMGLGGGGGGGGGGGGGDGDAAGRLP). The span at 34–51 (GLGGGGGGGGGGGGGDGD) shows a compositional bias: gly residues. 3 C3H1-type zinc fingers span residues 59-87 (RPGEEDCVYYLRTGACGFGDRCRYNHPRD), 108-136 (RAGQPICEYYMKTGTCKFGTNCKYHHPKQ), and 153-181 (RLGEKECSYYMKTGQCKFGTTCKFHHPEF). Positions 290-301 (SSTGQSSNNQQE) are enriched in polar residues. Residues 290–309 (SSTGQSSNNQQEHGFPERPG) are disordered. 2 consecutive C3H1-type zinc fingers follow at residues 307–335 (RPGQPDCQYYMRTGDCKFGATCKYHHPRE) and 353–381 (RPGAQPCAYYAQNGYCRYGVACKYDHPMG). The tract at residues 456 to 476 (TMMRAQTNTTSGGSSSPGGGR) is disordered.

It localises to the nucleus. The protein is Zinc finger CCCH domain-containing protein 6 of Oryza sativa subsp. japonica (Rice).